A 129-amino-acid chain; its full sequence is Protein Turandot A (129 aa).

The signal sequence occupies residues 1-21; sequence MNSLTGFMCCALLLISPLCMG. Asn-49 is a glycosylation site (N-linked (GlcNAc...) asparagine).

It belongs to the Turandot family.

It localises to the secreted. Functionally, a humoral factor that plays a role in stress tolerance; gives increased resistance to the lethal effects of bacterial challenge and stress. Regulated by the JAK/STAT pathway and NF-KB-like Relish pathway in the fat body, upd3 in the hemocytes and Mekk1 in response to septic injury and consequent immune response. This chain is Protein Turandot A (TotA), found in Drosophila yakuba (Fruit fly).